Consider the following 203-residue polypeptide: ATP-dependent Clp protease proteolytic subunit 2 (203 aa).

The Nucleophile role is filled by Ser100. His125 is an active-site residue.

This sequence belongs to the peptidase S14 family. Fourteen ClpP subunits assemble into 2 heptameric rings which stack back to back to give a disk-like structure with a central cavity, resembling the structure of eukaryotic proteasomes.

It is found in the cytoplasm. It carries out the reaction Hydrolysis of proteins to small peptides in the presence of ATP and magnesium. alpha-casein is the usual test substrate. In the absence of ATP, only oligopeptides shorter than five residues are hydrolyzed (such as succinyl-Leu-Tyr-|-NHMec, and Leu-Tyr-Leu-|-Tyr-Trp, in which cleavage of the -Tyr-|-Leu- and -Tyr-|-Trp bonds also occurs).. Its function is as follows. Cleaves peptides in various proteins in a process that requires ATP hydrolysis. Has a chymotrypsin-like activity. Plays a major role in the degradation of misfolded proteins. This Nocardia farcinica (strain IFM 10152) protein is ATP-dependent Clp protease proteolytic subunit 2.